We begin with the raw amino-acid sequence, 346 residues long: N-acetyl-gamma-glutamyl-phosphate reductase (346 aa).

Cys-150 is an active-site residue.

This sequence belongs to the NAGSA dehydrogenase family. Type 1 subfamily.

It is found in the cytoplasm. It carries out the reaction N-acetyl-L-glutamate 5-semialdehyde + phosphate + NADP(+) = N-acetyl-L-glutamyl 5-phosphate + NADPH + H(+). Its pathway is amino-acid biosynthesis; L-arginine biosynthesis; N(2)-acetyl-L-ornithine from L-glutamate: step 3/4. Catalyzes the NADPH-dependent reduction of N-acetyl-5-glutamyl phosphate to yield N-acetyl-L-glutamate 5-semialdehyde. The protein is N-acetyl-gamma-glutamyl-phosphate reductase of Alkaliphilus metalliredigens (strain QYMF).